The sequence spans 192 residues: Interferon (192 aa).

A signal peptide spans 1-30 (MAVPASPQHPRGYGILLLTLLMKALAAAAA). Cystine bridges form between Cys-31-Cys-128, Cys-60-Cys-154, and Cys-67-Cys-167. N-linked (GlcNAc...) asparagine glycosylation is found at Asn-70 and Asn-77.

The protein belongs to the alpha/beta interferon family.

It localises to the secreted. Has antiviral activities. In Meleagris gallopavo (Wild turkey), this protein is Interferon.